The sequence spans 81 residues: Putative membrane protein insertion efficiency factor (81 aa).

The protein belongs to the UPF0161 family.

Its subcellular location is the cell inner membrane. Could be involved in insertion of integral membrane proteins into the membrane. This is Putative membrane protein insertion efficiency factor from Legionella pneumophila subsp. pneumophila (strain Philadelphia 1 / ATCC 33152 / DSM 7513).